A 316-amino-acid polypeptide reads, in one-letter code: Ribosomal protein L11 methyltransferase (316 aa).

S-adenosyl-L-methionine is bound by residues Thr157, Gly178, Asp200, and Asn243.

It belongs to the methyltransferase superfamily. PrmA family.

It localises to the cytoplasm. It catalyses the reaction L-lysyl-[protein] + 3 S-adenosyl-L-methionine = N(6),N(6),N(6)-trimethyl-L-lysyl-[protein] + 3 S-adenosyl-L-homocysteine + 3 H(+). Functionally, methylates ribosomal protein L11. The chain is Ribosomal protein L11 methyltransferase from Streptococcus pneumoniae (strain Hungary19A-6).